Here is a 553-residue protein sequence, read N- to C-terminus: Phospholipase B-like 1 (553 aa).

The signal sequence occupies residues 1–38 (MTRGGPGGRPGLPQPPPLLLLLLLLPLLLVTAEPPKPA). Asparagine 71 carries an N-linked (GlcNAc...) (high mannose) asparagine; alternate glycan. An N-linked (GlcNAc...) (hybrid) asparagine; alternate glycan is attached at asparagine 71. Residues 209–227 (LSPTKNGSLKVFKRWDMGH) constitute a propeptide, removed in mature form. 2 N-linked (GlcNAc...) (high mannose) asparagine; alternate glycosylation sites follow: asparagine 308 and asparagine 366. Asparagine 308 and asparagine 366 each carry an N-linked (GlcNAc...) (hybrid) asparagine; alternate glycan. Asparagine 411 carries N-linked (GlcNAc...) asparagine glycosylation. 2 disulfides stabilise this stretch: cysteine 470–cysteine 475 and cysteine 474–cysteine 489. Asparagine 526 carries an N-linked (GlcNAc...) (high mannose) asparagine; alternate glycan. Residue asparagine 526 is glycosylated (N-linked (GlcNAc...) (hybrid) asparagine; alternate).

Belongs to the phospholipase B-like family. In terms of assembly, may form a homodimer, each monomer is composed of a chain A and a chain B. In terms of processing, the maturation cleavages that produces chains A and B are required to open the putative substrate binding pocket. Both chains A and B remain associated in the mature protein. In terms of tissue distribution, expressed in neutrophils and monocytes.

Its subcellular location is the lysosome. Its function is as follows. In view of the small size of the putative binding pocket, it has been proposed that it may act as an amidase or a peptidase. Exhibits a weak phospholipase activity, acting on various phospholipids, including phosphatidylcholine, phosphatidylinositol, phosphatidylethanolamine and lysophospholipids. The protein is Phospholipase B-like 1 (PLBD1) of Homo sapiens (Human).